Here is a 371-residue protein sequence, read N- to C-terminus: MSL complex subunit 3B (371 aa).

Disordered regions lie at residues 1–47 (MATL…DERA) and 160–230 (EERA…PQAK). Residues 8–47 (PKDDGEGKDEGGSDRGDGDSKPKGKKEVEPHTRREADERA) show a composition bias toward basic and acidic residues. The MRG domain occupies 44–367 (DERAMRIPIP…CEAHYSSKNP (324 aa)). The span at 183 to 193 (SESQAVAGPAA) shows a compositional bias: low complexity. Residues 206–216 (APRRSTRHSTH) show a composition bias toward basic residues.

It localises to the nucleus. Probable non-catalytic component of the MSL histone acetyltransferase complex, a multiprotein complex that mediates the majority of histone H4 acetylation at 'Lys-16' (H4K16ac), an epigenetic mark that prevents chromatin compaction. In Mus musculus (Mouse), this protein is MSL complex subunit 3B.